Reading from the N-terminus, the 1866-residue chain is Protein strawberry notch homolog (1866 aa).

Over residues 19-28 (QQSSPTPSTS) the composition is skewed to low complexity. Disordered stretches follow at residues 19-63 (QQSS…HSSS), 132-151 (TAPT…IVPK), 156-253 (LFET…GLPI), 561-581 (GMAS…QKAK), and 1112-1308 (GLSG…ARGS). Composition is skewed to polar residues over residues 37–63 (QSFS…HSSS) and 134–146 (PTVN…TPTV). Residues 161-176 (TADSPTPSGDTSTTAS) are compositionally biased toward low complexity. Polar residues-rich tracts occupy residues 191–203 (DRQN…TARS) and 210–228 (TPST…LTQR). A compositionally biased stretch (low complexity) spans 229 to 239 (SHTSSPASSAS). Residues 566–577 (RLQTTPQPLTKS) are compositionally biased toward polar residues. Over residues 1112–1126 (GLSGIGRSSMSSSTG) the composition is skewed to low complexity. Residues 1142–1152 (DGSDDEVENDM) show a composition bias toward acidic residues. Residues 1164 to 1177 (ESAREEAEGARTLE) show a composition bias toward basic and acidic residues. Over residues 1194–1213 (SSSDDSDEEVVKDEDEDEEA) the composition is skewed to acidic residues. 2 stretches are compositionally biased toward basic and acidic residues: residues 1262–1281 (RDEE…EERR) and 1290–1304 (RRAE…EELQ).

It belongs to the SBNO family. In terms of tissue distribution, expressed in the somatic gonad, neurons, hypodermal cells, seam cells, the excretory system, and intestinal cells (at protein level).

It localises to the nucleus. Its function is as follows. Transcriptional activator that functions upstream of the let-60/Ras and let-23/EGFR signaling pathways to positively regulate lin-3 expression and thereby promote vulval induction. Plays a role in excretory duct development. Plays a role in male tail development. The protein is Protein strawberry notch homolog of Caenorhabditis elegans.